Consider the following 626-residue polypeptide: Chaperone protein HtpG (626 aa).

An a; substrate-binding region spans residues 1-343 (MHKQTLSFQA…SADLPLNVSR (343 aa)). A b region spans residues 344 to 558 (ELLQESRAVK…DGDMSTQLAR (215 aa)). The segment at 559 to 626 (MLKQAGQAVP…YVKRVNALLV (68 aa)) is c.

This sequence belongs to the heat shock protein 90 family. As to quaternary structure, homodimer.

The protein resides in the cytoplasm. In terms of biological role, molecular chaperone. Has ATPase activity. This chain is Chaperone protein HtpG, found in Polaromonas sp. (strain JS666 / ATCC BAA-500).